Reading from the N-terminus, the 271-residue chain is Probable short-chain type dehydrogenase/reductase VdlC (271 aa).

1–25 (MAVITGASSGIGLECVLMLLNQGYK) contacts NAD(+). Ser129 is a binding site for substrate. Catalysis depends on Tyr142, which acts as the Proton acceptor.

This sequence belongs to the short-chain dehydrogenases/reductases (SDR) family.

The protein is Probable short-chain type dehydrogenase/reductase VdlC (vdlC) of Helicobacter pylori (strain J99 / ATCC 700824) (Campylobacter pylori J99).